The primary structure comprises 365 residues: uncharacterized protein (365 aa).

Helical transmembrane passes span Thr-105–Leu-125, Ile-151–Ile-171, and Ile-187–Phe-207.

Its subcellular location is the cell membrane. This is an uncharacterized protein from Mycoplasma genitalium (strain ATCC 33530 / DSM 19775 / NCTC 10195 / G37) (Mycoplasmoides genitalium).